The sequence spans 466 residues: Alpha-1A adrenergic receptor (466 aa).

Over Met-1–Ile-27 the chain is Extracellular. N-linked (GlcNAc...) asparagine glycans are attached at residues Asn-7, Asn-13, and Asn-22. The chain crosses the membrane as a helical span at residues Leu-28–Val-51. The Cytoplasmic portion of the chain corresponds to Ala-52–Tyr-64. The chain crosses the membrane as a helical span at residues Ile-65–Ile-88. At Leu-89–Cys-99 the chain is on the extracellular side. Cysteines 99 and 176 form a disulfide. The helical transmembrane segment at Asn-100–Ile-122 threads the bilayer. Residues Asp-123–Gly-143 lie on the Cytoplasmic side of the membrane. The helical transmembrane segment at Val-144–Gln-167 threads the bilayer. Over Pro-168–Glu-181 the chain is Extracellular. A helical transmembrane segment spans residues Pro-182–Cys-205. Over Arg-206 to Thr-273 the chain is Cytoplasmic. Ser-215 carries the post-translational modification Phosphoserine; by PKA. The helical transmembrane segment at Leu-274 to Phe-297 threads the bilayer. The Extracellular segment spans residues Phe-298–Glu-305. Residues Thr-306–Ser-329 traverse the membrane as a helical segment. Topologically, residues Ser-330–Val-466 are cytoplasmic. Residues Lys-334–Arg-349 carry the Nuclear localization signal motif. The S-palmitoyl cysteine moiety is linked to residue Cys-345.

It belongs to the G-protein coupled receptor 1 family. Adrenergic receptor subfamily. ADRA1A sub-subfamily. As to quaternary structure, homo- and heterooligomer. Heterooligomerizes with ADRA1B homooligomers in cardiac myocytes. Interacts with CAVIN4. Post-translationally, C-terminal Ser or Thr residues may be phosphorylated. Abundant in heart, brain, aorta, vena cava, vas deferens, submaxillary gland, lung, and kidney. Found at lower levels in prostate, parotid gland and skeletal muscle.

It localises to the nucleus membrane. Its subcellular location is the cell membrane. The protein localises to the cytoplasm. The protein resides in the membrane. It is found in the caveola. In terms of biological role, this alpha-adrenergic receptor mediates its action by association with G proteins that activate a phosphatidylinositol-calcium second messenger system. Its effect is mediated by G(q) and G(11) proteins. Nuclear ADRA1A-ADRA1B heterooligomers regulate phenylephrine (PE)-stimulated ERK signaling in cardiac myocytes. This chain is Alpha-1A adrenergic receptor (Adra1a), found in Rattus norvegicus (Rat).